Reading from the N-terminus, the 406-residue chain is Linalool 8-monooxygenase (406 aa).

Heme is bound at residue C355.

Belongs to the cytochrome P450 family. Heme is required as a cofactor.

The enzyme catalyses linalool + 2 reduced [NADPH--hemoprotein reductase] + 2 O2 = (6E)-8-oxolinalool + 2 oxidized [NADPH--hemoprotein reductase] + 3 H2O + 2 H(+). It participates in terpene metabolism; linalool degradation. In terms of biological role, catalyzes the 8-methyl hydroxylation of linalool. The protein is Linalool 8-monooxygenase (linC) of Pseudomonas putida (Arthrobacter siderocapsulatus).